A 372-amino-acid chain; its full sequence is Tyrosine--tRNA ligase (372 aa).

Tyr37, Tyr169, Gln173, Asp176, and Gln191 together coordinate L-tyrosine. Residues 246 to 250 (KMSKS) carry the 'KMSKS' region motif. Lys249 is an ATP binding site.

Belongs to the class-I aminoacyl-tRNA synthetase family. TyrS type 4 subfamily. As to quaternary structure, homodimer.

It is found in the cytoplasm. It catalyses the reaction tRNA(Tyr) + L-tyrosine + ATP = L-tyrosyl-tRNA(Tyr) + AMP + diphosphate + H(+). Its function is as follows. Catalyzes the attachment of tyrosine to tRNA(Tyr) in a two-step reaction: tyrosine is first activated by ATP to form Tyr-AMP and then transferred to the acceptor end of tRNA(Tyr). This Pyrobaculum calidifontis (strain DSM 21063 / JCM 11548 / VA1) protein is Tyrosine--tRNA ligase.